A 91-amino-acid chain; its full sequence is Probable Fe(2+)-trafficking protein (91 aa).

This sequence belongs to the Fe(2+)-trafficking protein family.

Functionally, could be a mediator in iron transactions between iron acquisition and iron-requiring processes, such as synthesis and/or repair of Fe-S clusters in biosynthetic enzymes. This Xanthomonas axonopodis pv. citri (strain 306) protein is Probable Fe(2+)-trafficking protein.